Here is a 289-residue protein sequence, read N- to C-terminus: Mitochondrial fission regulator 1-like (289 aa).

A Phosphothreonine modification is found at Thr-27. 8 positions are modified to phosphoserine: Ser-38, Ser-100, Ser-107, Ser-221, Ser-222, Ser-235, Ser-258, and Ser-270.

It belongs to the MTFR1 family. Post-translationally, phosphorylated by AMPK. Upon stress, phosphorylation by AMPK is sufficient to induce mitochondrial fragmentation.

The protein resides in the mitochondrion outer membrane. Its function is as follows. Mitochondrial protein required for adaptation of miochondrial dynamics to metabolic changes. Regulates mitochondrial morphology at steady state and mediates AMPK-dependent stress-induced mitochondrial fragmentation via the control of OPA1 levels. The polypeptide is Mitochondrial fission regulator 1-like (MTFR1L) (Bos taurus (Bovine)).